Consider the following 206-residue polypeptide: Cytochrome c biogenesis ATP-binding export protein CcmA (206 aa).

Residues 3-206 (VSVDDLCVTR…LAGASDEAFL (204 aa)) enclose the ABC transporter domain. 35 to 42 (GPNGSGKT) contacts ATP.

It belongs to the ABC transporter superfamily. CcmA exporter (TC 3.A.1.107) family. In terms of assembly, the complex is composed of two ATP-binding proteins (CcmA) and two transmembrane proteins (CcmB).

The protein localises to the cell inner membrane. It catalyses the reaction heme b(in) + ATP + H2O = heme b(out) + ADP + phosphate + H(+). Part of the ABC transporter complex CcmAB involved in the biogenesis of c-type cytochromes; once thought to export heme, this seems not to be the case, but its exact role is uncertain. Responsible for energy coupling to the transport system. This is Cytochrome c biogenesis ATP-binding export protein CcmA from Roseobacter denitrificans (strain ATCC 33942 / OCh 114) (Erythrobacter sp. (strain OCh 114)).